We begin with the raw amino-acid sequence, 367 residues long: Leucine carboxyl methyltransferase 1 (367 aa).

Residues arginine 84, glycine 109, aspartate 132, 187–188 (DL), and glutamate 212 each bind S-adenosyl-L-methionine.

The protein belongs to the methyltransferase superfamily. LCMT family.

The catalysed reaction is [phosphatase 2A protein]-C-terminal L-leucine + S-adenosyl-L-methionine = [phosphatase 2A protein]-C-terminal L-leucine methyl ester + S-adenosyl-L-homocysteine. Methylates the carboxyl group of the C-terminal leucine residue of protein phosphatase 2A catalytic subunits to form alpha-leucine ester residues. The protein is Leucine carboxyl methyltransferase 1 (PPM1) of Candida albicans (strain SC5314 / ATCC MYA-2876) (Yeast).